Consider the following 214-residue polypeptide: Oxaloacetate tautomerase fahd-1, mitochondrial (214 aa).

Mg(2+) is bound by residues Glu-65, Glu-67, and Asp-96.

It belongs to the FAH family. Mg(2+) serves as cofactor. Mn(2+) is required as a cofactor. Widely expressed.

The protein resides in the mitochondrion. The enzyme catalyses oxaloacetate = enol-oxaloacetate. Tautomerase that converts enol-oxaloacetate, a strong inhibitor of succinate dehydrogenase, to the physiological keto form of oxaloacetate. The chain is Oxaloacetate tautomerase fahd-1, mitochondrial from Caenorhabditis elegans.